We begin with the raw amino-acid sequence, 136 residues long: Nucleoside diphosphate kinase (136 aa).

ATP-binding residues include K10, F58, R86, T92, R104, and N114. Residue H117 is the Pros-phosphohistidine intermediate of the active site.

Belongs to the NDK family. Homotetramer. Requires Mg(2+) as cofactor.

It is found in the cytoplasm. The catalysed reaction is a 2'-deoxyribonucleoside 5'-diphosphate + ATP = a 2'-deoxyribonucleoside 5'-triphosphate + ADP. It carries out the reaction a ribonucleoside 5'-diphosphate + ATP = a ribonucleoside 5'-triphosphate + ADP. Its function is as follows. Major role in the synthesis of nucleoside triphosphates other than ATP. The ATP gamma phosphate is transferred to the NDP beta phosphate via a ping-pong mechanism, using a phosphorylated active-site intermediate. The protein is Nucleoside diphosphate kinase of Mycobacterium ulcerans (strain Agy99).